The chain runs to 316 residues: 4-hydroxyphenylacetate decarboxylase activating enzyme (316 aa).

One can recognise a Radical SAM core domain in the interval 20–307; it reads HDGPGCRTTV…QDIFLDNGIA (288 aa). Positions 34, 38, 41, 60, 66, 69, and 105 each coordinate [4Fe-4S] cluster. An S-adenosyl-L-methionine-binding site is contributed by 40–42; the sequence is WCA. A 4Fe-4S ferredoxin-type domain is found at 84–115; that stretch reads NKPVIDWNICKDCESFECVNSCYYNAFKLCAK. S-adenosyl-L-methionine is bound by residues glycine 144, 193 to 195, and histidine 267; that span reads DIK.

This sequence belongs to the organic radical-activating enzymes family. As to quaternary structure, monomer. It depends on [4Fe-4S] cluster as a cofactor.

The enzyme catalyses glycyl-[protein] + reduced [flavodoxin] + S-adenosyl-L-methionine = glycin-2-yl radical-[protein] + semiquinone [flavodoxin] + 5'-deoxyadenosine + L-methionine + H(+). Catalyzes activation of 4-hydroxyphenylacetate decarboxylase under anaerobic conditions by generation of an organic free radical on a glycine residue, via a homolytic cleavage of S-adenosyl-L-methionine (SAM). The chain is 4-hydroxyphenylacetate decarboxylase activating enzyme from Clostridioides difficile (Peptoclostridium difficile).